We begin with the raw amino-acid sequence, 135 residues long: Transcription antitermination protein NusB (135 aa).

This sequence belongs to the NusB family.

Functionally, involved in transcription antitermination. Required for transcription of ribosomal RNA (rRNA) genes. Binds specifically to the boxA antiterminator sequence of the ribosomal RNA (rrn) operons. The polypeptide is Transcription antitermination protein NusB (Clostridium perfringens (strain SM101 / Type A)).